We begin with the raw amino-acid sequence, 196 residues long: Large ribosomal subunit protein mL66 (196 aa).

Residues 1-34 (MAALRRLVSGCGRQLQAFLAGPAATGWLWLPARG) constitute a mitochondrion transit peptide.

The protein belongs to the bacterial ribosomal protein bS18 family. Mitochondrion-specific ribosomal protein mL66 subfamily. Component of the mitochondrial ribosome small subunit (28S) which comprises a 12S rRNA and about 30 distinct proteins.

It localises to the mitochondrion. The polypeptide is Large ribosomal subunit protein mL66 (Mrps18a) (Mus musculus (Mouse)).